A 685-amino-acid polypeptide reads, in one-letter code: Probable serine/threonine-protein kinase CPE1738 (685 aa).

One can recognise a Protein kinase domain in the interval 10–275; the sequence is YELLQCVGEG…LEKIKKDPNV (266 aa). ATP contacts are provided by residues 16-24 and lysine 39; that span reads VGEGGMSFV. The active-site Proton acceptor is the glutamate 143. The tract at residues 277 to 339 is disordered; it reads ISSKSAEDED…NIQTKPQKAI (63 aa). The segment covering 306 to 329 has biased composition (acidic residues); the sequence is EPDEDDEDDDEYYEDDEDEDEEEN. PASTA domains follow at residues 376 to 440, 441 to 508, 513 to 581, and 589 to 648; these read GKDV…TVSG, GEGQ…TISK, KSET…TINY, and EKPK…TMEE. The tract at residues 480 to 500 is disordered; sequence VPRGEVISQSPNANESVDKGS. The interval 623-685 is disordered; that stretch reads DTAKVKSVSN…PKQPEQSGNN (63 aa). Composition is skewed to low complexity over residues 627–645 and 654–685; these read VKSVSNSGEVEEGGSVSVT and QPTQPNQPTQPTQPNQQAQPEQPKQPEQSGNN.

This sequence belongs to the protein kinase superfamily. Ser/Thr protein kinase family.

The enzyme catalyses L-seryl-[protein] + ATP = O-phospho-L-seryl-[protein] + ADP + H(+). It catalyses the reaction L-threonyl-[protein] + ATP = O-phospho-L-threonyl-[protein] + ADP + H(+). The sequence is that of Probable serine/threonine-protein kinase CPE1738 from Clostridium perfringens (strain 13 / Type A).